The following is a 245-amino-acid chain: tRNA1(Val) (adenine(37)-N6)-methyltransferase (245 aa).

Belongs to the methyltransferase superfamily. tRNA (adenine-N(6)-)-methyltransferase family.

It is found in the cytoplasm. It carries out the reaction adenosine(37) in tRNA1(Val) + S-adenosyl-L-methionine = N(6)-methyladenosine(37) in tRNA1(Val) + S-adenosyl-L-homocysteine + H(+). Its function is as follows. Specifically methylates the adenine in position 37 of tRNA(1)(Val) (anticodon cmo5UAC). The sequence is that of tRNA1(Val) (adenine(37)-N6)-methyltransferase from Shigella boydii serotype 18 (strain CDC 3083-94 / BS512).